The primary structure comprises 787 residues: Serine/threonine-protein kinase SCH9 (787 aa).

Disordered stretches follow at residues 1-82 (MVDF…QSGT), 132-172 (PQQQ…GSSQ), and 238-280 (SPVS…LFGQ). Low complexity predominate over residues 132-155 (PQQQQQQQAQQPPPEQQQSSAPYQ). Composition is skewed to polar residues over residues 156 to 172 (NSAN…GSSQ) and 239 to 263 (PVSS…SNHG). The C2 domain maps to 182–354 (DKTGNKLSPA…KNNKNESEWL (173 aa)). A Protein kinase domain is found at 392-653 (FHFLRLLGKG…ARELKAHPFF (262 aa)). ATP contacts are provided by residues 398–406 (LGKGTFGQV) and lysine 421. The Proton acceptor role is filled by aspartate 518. The AGC-kinase C-terminal domain occupies 654 to 729 (ADIDWDLLRA…VDDSTMDDHF (76 aa)).

This sequence belongs to the protein kinase superfamily. AGC Ser/Thr protein kinase family. cAMP subfamily.

It catalyses the reaction L-seryl-[protein] + ATP = O-phospho-L-seryl-[protein] + ADP + H(+). It carries out the reaction L-threonyl-[protein] + ATP = O-phospho-L-threonyl-[protein] + ADP + H(+). Protein kinase that is part of growth control pathway which is at least partially redundant with the cAMP pathway. Plays a role in filamentous growth and virulence. Prevents hypha formation specifically under hypoxia at high CO(2) levels. Required for chlamydospore formation, distinctive morphological feature of the fungal pathogen C.albicans that can be induced to form in oxygen-limited environments and has been reported in clinical specimens. This Candida albicans (strain SC5314 / ATCC MYA-2876) (Yeast) protein is Serine/threonine-protein kinase SCH9 (SCH9).